The following is a 330-amino-acid chain: MATIKDIAQEAGFSISTVSRVLNNDESLSVPDETREKIYEAAEKLNYRKKTVRPLVKHIAFLYWLTDKEELEDVYFKTMRLEVEKLAKAFNVDMTTYKIADGIESIPEHTEGFIAVGTFSDEELAFLRNLTENGVFIDSTPDPDHFDSVRPDLAQMTRKTVNILTEKGHKSIGFIGGTYKNPNTNQDEMDIREQTFRSYMREKAMLDERYIFCHRGFSVENGYRLMSAAIDTLGDQLPTAFMIAADPIAVGCLQALNEKGIAIPNRVSIVSINNISFAKYVSPPLTTFHIDIHELCKNAVQLLLEQVQDKRRTVKTLYVGAELIVRKSMN.

Positions 2–57 (ATIKDIAQEAGFSISTVSRVLNNDESLSVPDETREKIYEAAEKLNYRKKTVRPLVK) constitute an HTH lacI-type domain. Residues 4 to 23 (IKDIAQEAGFSISTVSRVLN) constitute a DNA-binding region (H-T-H motif).

Its function is as follows. Negatively regulates the expression of the ganSPQAB operon. Inhibits transcription of the operon by binding to an operator in the promoter region. In the presence of galactobiose, GanR dissociates from the promoter, resulting in the expression of the gan operon. This chain is HTH-type transcriptional regulator GanR, found in Bacillus subtilis (strain 168).